A 306-amino-acid polypeptide reads, in one-letter code: tRNA dimethylallyltransferase 2 (306 aa).

19 to 26 provides a ligand contact to ATP; that stretch reads GATASGKT. 21 to 26 provides a ligand contact to substrate; that stretch reads TASGKT. An interaction with substrate tRNA region spans residues 44–47; it reads DSRQ.

This sequence belongs to the IPP transferase family. In terms of assembly, monomer. Mg(2+) is required as a cofactor.

It carries out the reaction adenosine(37) in tRNA + dimethylallyl diphosphate = N(6)-dimethylallyladenosine(37) in tRNA + diphosphate. Its function is as follows. Catalyzes the transfer of a dimethylallyl group onto the adenine at position 37 in tRNAs that read codons beginning with uridine, leading to the formation of N6-(dimethylallyl)adenosine (i(6)A). In Citrifermentans bemidjiense (strain ATCC BAA-1014 / DSM 16622 / JCM 12645 / Bem) (Geobacter bemidjiensis), this protein is tRNA dimethylallyltransferase 2.